The chain runs to 294 residues: Nucleotide-binding protein Dde_1774 (294 aa).

14–21 is a binding site for ATP; sequence GLSGAGKS. 66–69 lines the GTP pocket; sequence DLRQ.

It belongs to the RapZ-like family.

In terms of biological role, displays ATPase and GTPase activities. In Oleidesulfovibrio alaskensis (strain ATCC BAA-1058 / DSM 17464 / G20) (Desulfovibrio alaskensis), this protein is Nucleotide-binding protein Dde_1774.